Consider the following 313-residue polypeptide: 4-hydroxy-3-methylbut-2-enyl diphosphate reductase (313 aa).

Cysteine 12 is a binding site for [4Fe-4S] cluster. Histidine 41 and histidine 74 together coordinate (2E)-4-hydroxy-3-methylbut-2-enyl diphosphate. Positions 41 and 74 each coordinate dimethylallyl diphosphate. 2 residues coordinate isopentenyl diphosphate: histidine 41 and histidine 74. Cysteine 96 is a [4Fe-4S] cluster binding site. Histidine 124 contributes to the (2E)-4-hydroxy-3-methylbut-2-enyl diphosphate binding site. Histidine 124 lines the dimethylallyl diphosphate pocket. Histidine 124 serves as a coordination point for isopentenyl diphosphate. Glutamate 126 acts as the Proton donor in catalysis. Threonine 167 lines the (2E)-4-hydroxy-3-methylbut-2-enyl diphosphate pocket. [4Fe-4S] cluster is bound at residue cysteine 197. The (2E)-4-hydroxy-3-methylbut-2-enyl diphosphate site is built by serine 225, serine 226, asparagine 227, and serine 269. Positions 225, 226, 227, and 269 each coordinate dimethylallyl diphosphate. The isopentenyl diphosphate site is built by serine 225, serine 226, asparagine 227, and serine 269.

It belongs to the IspH family. In terms of assembly, homodimer. It depends on [4Fe-4S] cluster as a cofactor.

It catalyses the reaction isopentenyl diphosphate + 2 oxidized [2Fe-2S]-[ferredoxin] + H2O = (2E)-4-hydroxy-3-methylbut-2-enyl diphosphate + 2 reduced [2Fe-2S]-[ferredoxin] + 2 H(+). The catalysed reaction is dimethylallyl diphosphate + 2 oxidized [2Fe-2S]-[ferredoxin] + H2O = (2E)-4-hydroxy-3-methylbut-2-enyl diphosphate + 2 reduced [2Fe-2S]-[ferredoxin] + 2 H(+). The protein operates within isoprenoid biosynthesis; dimethylallyl diphosphate biosynthesis; dimethylallyl diphosphate from (2E)-4-hydroxy-3-methylbutenyl diphosphate: step 1/1. It functions in the pathway isoprenoid biosynthesis; isopentenyl diphosphate biosynthesis via DXP pathway; isopentenyl diphosphate from 1-deoxy-D-xylulose 5-phosphate: step 6/6. Catalyzes the conversion of 1-hydroxy-2-methyl-2-(E)-butenyl 4-diphosphate (HMBPP) into a mixture of isopentenyl diphosphate (IPP) and dimethylallyl diphosphate (DMAPP). Acts in the terminal step of the DOXP/MEP pathway for isoprenoid precursor biosynthesis. In Buchnera aphidicola subsp. Schizaphis graminum (strain Sg), this protein is 4-hydroxy-3-methylbut-2-enyl diphosphate reductase.